Reading from the N-terminus, the 209-residue chain is MEILPKYKPEEILAIIHTHPKGPAEPSINDLLMARHVLTNNKNTIHGVLAENDGKLQLIMYNYWTIDGSKLAKMLSRFLDNGVKPPREEKLKVAHAYVTNIEDFDVSKIPEIADHFALWRYYWLIDTSDLFVFDPSNIDIYKKLKEKALFIPTGRDEGWLVLGVDTSGAEPIVYKVKECKDKVTLRSTGHEFSPIIVEWCKEKPMCRVA.

An MPN domain is found at Met1 to Asp67. Residues His17, His19, and Asp30 each coordinate Zn(2+). Positions His17–Asp30 match the JAMM motif motif.

This is an uncharacterized protein from Acidianus convivator (ATV).